The sequence spans 521 residues: Cytochrome P450 1A1 (521 aa).

F229 provides a ligand contact to substrate. A heme-binding site is contributed by C463.

This sequence belongs to the cytochrome P450 family. It depends on heme as a cofactor.

The protein localises to the endoplasmic reticulum membrane. It localises to the microsome membrane. The enzyme catalyses an organic molecule + reduced [NADPH--hemoprotein reductase] + O2 = an alcohol + oxidized [NADPH--hemoprotein reductase] + H2O + H(+). In terms of biological role, cytochromes P450 are a group of heme-thiolate monooxygenases. They oxidize a variety of structurally unrelated compounds, including steroids, fatty acids, and xenobiotics. The protein is Cytochrome P450 1A1 (cyp1a1) of Chelon auratus (Golden grey mullet).